The following is a 334-amino-acid chain: GTPase Obg (334 aa).

Residues 1 to 159 (MRFVDEVVIK…KEVRLELNLL (159 aa)) enclose the Obg domain. In terms of domain architecture, OBG-type G spans 160 to 331 (ADVALLGLPN…LAKKLNEFLQ (172 aa)). GTP is bound by residues 166 to 173 (GLPNAGKS), 191 to 195 (FTTMY), 212 to 215 (DIPG), 282 to 285 (NKID), and 312 to 314 (SAA). Mg(2+)-binding residues include Ser-173 and Thr-193.

This sequence belongs to the TRAFAC class OBG-HflX-like GTPase superfamily. OBG GTPase family. In terms of assembly, monomer. Mg(2+) serves as cofactor.

Its subcellular location is the cytoplasm. In terms of biological role, an essential GTPase which binds GTP, GDP and possibly (p)ppGpp with moderate affinity, with high nucleotide exchange rates and a fairly low GTP hydrolysis rate. Plays a role in control of the cell cycle, stress response, ribosome biogenesis and in those bacteria that undergo differentiation, in morphogenesis control. The protein is GTPase Obg of Francisella tularensis subsp. tularensis (strain FSC 198).